A 234-amino-acid polypeptide reads, in one-letter code: Demethylmenaquinone methyltransferase (234 aa).

Residues Thr58, Asp79, and 104-105 contribute to the S-adenosyl-L-methionine site; that span reads NA.

This sequence belongs to the class I-like SAM-binding methyltransferase superfamily. MenG/UbiE family.

The enzyme catalyses a 2-demethylmenaquinol + S-adenosyl-L-methionine = a menaquinol + S-adenosyl-L-homocysteine + H(+). It participates in quinol/quinone metabolism; menaquinone biosynthesis; menaquinol from 1,4-dihydroxy-2-naphthoate: step 2/2. Its function is as follows. Methyltransferase required for the conversion of demethylmenaquinol (DMKH2) to menaquinol (MKH2). The chain is Demethylmenaquinone methyltransferase from Lysinibacillus sphaericus (strain C3-41).